We begin with the raw amino-acid sequence, 1407 residues long: MASSSPMFNDHAIARSKYALNSVLQQTNELHDGNGGGGYTPSSPHLGGVSLNKSQNQPYTQYNNGGGGGGGGGGHINPMHLNLNSITNNHNNHHNHHPNTLSTPHNNNHNNNNHSTSHHPHSNSVANGGHLSQSITQQRGGLADLANAVINRKNRSDSVQTKMKPTDSASNIESWAKVEKFSSSIFDSEKSKKSNIFQKYTLRLKNSYEKGYLHQHYNSQIMLLRITNLIGIVAVSYGFTKEAIFMLIAIRILCFNLFAFSIFLSFLRNRELYKKLFHPLFLFSFTTFFITILLEYKTTTTTLILFLYVVIFCCLYALGCLLFIWMVMCNLMNAICFIIFIFLESTLDRNNLISFVIYILTMFLVGASHLYVLEKFRKESFIAEKKLIKESNILKNEKEKSSKLLNNILPDFIIENIVYDFEKRDIVIPEPEEYKSCSILCFDIVQFTNMSAKLDSPSRLVDLLTQVFREFDTVVLRNGCQKIKTDGDAYICACGLKSKKKAKKQMPNSKSTPLLQSTSSTSVNNIDLDKDNKDNNNNNNNNKNSNNNFKNKNNIINNNNNSNSNNNNNNNSNNNNINNSGNDDDDEEIEDSELEHFEKLIDVAIEIMNLDVLKETGNTEGIQVQFRCGIAAGSVYGGVIGSQKYQFDIWGDTIARSHTLEQLGQPGKVHVGETIMTHKNWLKKWQYNYNIVSNSECKDQEHDYEFHKAHGECITSYFVDWKDDYREKKKKDLSCDFSINKVLNAETIESKSNNNNYNNNNYNNNNYNNNYNNNNLNNNSNNNNNEYGSSSSSSSVLGEAVTEQIDCNNTNPPLQHKKSQSILTNNENDIVSPSLTSNSPILDTTVNNNNNNNNTNNNNKNQNNIYGNNNNNEEDFKIKSKSNSSFEIEMSNIKKPKSRFIDRVMGILHHVKISNDKIDKEIIQIDEDFVKVTKLRKYFLFFENLTTEKFFHKYVIINNVVETKFFLVIGLILHLMFYLDDHIMDSAPYFNSNVIYLVMGIAFLVYIGLSFTRIFRTPLVYQIAFFILLCAFGVCTVLELIRFQNPLARSSLTRVCATLFYLNVFHSLNFLSVLFLNLFIFSFFIICSILISPTLTNHLYETDYIGFVIVLLIQICSSYGMKLAMRKAWVVNCKINFKTISVNKEKDKFNFLLKSIFPQSALTKLRDMIDTPNIETKGIVYVQPHQDVSIMFIQIAGFQEYDEPKDLIKKLNDIFSFFDGLLNQKYGGTVEKIKTIGNTYMAVSGLDGSPSFLEKMSDFALDVKAYTNSVAISRVVRIGISHGPLVAGCIGISRAKFDVWGDTANTASRMQSNAQDNEIMVTHSVYERLNKLFYFDDEKEILVKGKGKMVTHVLKGKKDLEQTNKWFTKPPEVWEVNATPAGIASPLSGTLLGEIGSFTTPRFHLSS.

The Cytoplasmic segment spans residues 1 to 219; it reads MASSSPMFND…KGYLHQHYNS (219 aa). A disordered region spans residues 28–131; it reads NELHDGNGGG…SNSVANGGHL (104 aa). Residues 51-63 show a composition bias toward polar residues; it reads LNKSQNQPYTQYN. The span at 64-75 shows a compositional bias: gly residues; sequence NGGGGGGGGGGH. 2 stretches are compositionally biased toward low complexity: residues 80-90 and 98-115; these read HLNLNSITNNH and PNTLSTPHNNNHNNNNHS. 6 helical membrane-spanning segments follow: residues 220–240, 244–264, 276–296, 304–324, 325–345, and 353–373; these read QIMLLRITNLIGIVAVSYGFT, IFMLIAIRILCFNLFAFSIFL, LFHPLFLFSFTTFFITILLEY, ILFLYVVIFCCLYALGCLLFI, WMVMCNLMNAICFIIFIFLES, and ISFVIYILTMFLVGASHLYVL. Residues 374-962 are Cytoplasmic-facing; that stretch reads EKFRKESFIA…KYVIINNVVE (589 aa). A Guanylate cyclase 1 domain is found at 438–661; that stretch reads SILCFDIVQF…DTIARSHTLE (224 aa). The Mg(2+) site is built by Asp443, Ile444, and Asp488. 3 disordered regions span residues 502-590, 751-799, and 828-876; these read AKKQ…EEIE, KSNN…VLGE, and NDIV…EEDF. 3 stretches are compositionally biased toward low complexity: residues 505–526, 535–581, and 752–795; these read QMPNSKSTPLLQSTSSTSVNNI, NNNN…NNSG, and SNNN…SSSS. Polar residues predominate over residues 828–846; sequence NDIVSPSLTSNSPILDTTV. The segment covering 847–871 has biased composition (low complexity); sequence NNNNNNNNTNNNNKNQNNIYGNNNN. Helical transmembrane passes span 963–979, 992–1012, 1018–1038, 1071–1091, and 1105–1125; these read TKFFLVIGLILHLMFYL, SNVIYLVMGIAFLVYIGLSFT, PLVYQIAFFILLCAFGVCTVL, LSVLFLNLFIFSFFIICSILI, and IGFVIVLLIQICSSYGMKLAM. In terms of domain architecture, Guanylate cyclase 2 spans 1189–1311; that stretch reads SIMFIQIAGF…DTANTASRMQ (123 aa). Residues 1378–1398 traverse the membrane as a helical segment; the sequence is ATPAGIASPLSGTLLGEIGSF. Over 1399–1407 the chain is Cytoplasmic; it reads TTPRFHLSS.

It belongs to the adenylyl cyclase class-4/guanylyl cyclase family. Mg(2+) is required as a cofactor. In terms of tissue distribution, expressed throughout the structure in the tipped mound and finger. Expressed primarily in the prestalk region of the slug. In the early culminant expression is increased in the posterior prespore and anterior-most regions and expands into the developing stalk. In the mid and late culminant it is expressed throughout the stalk.

The protein resides in the membrane. Its subcellular location is the cell projection. It localises to the uropodium. The catalysed reaction is ATP = 3',5'-cyclic AMP + diphosphate. Regulated by cyclic AMP receptor 1 through a guanine nucleotide binding protein and protein CRAC. Both positively and negatively regulated by extracellular cAMP; this regulation is part of the mechanism that establishes the oscillatory cAMP waves during aggregation. Coordinates cell aggregation by synthesizing the cAMP that influences differentiation and morphogenesis of cells within a developing multicellular structure. In Dictyostelium discoideum (Social amoeba), this protein is Adenylate cyclase, aggregation specific (acaA).